A 527-amino-acid polypeptide reads, in one-letter code: UDP-glucuronosyltransferase 2A3 (527 aa).

Residues Met-1–Cys-23 form the signal peptide. Topologically, residues Gly-24 to His-486 are extracellular. A glycan (N-linked (GlcNAc...) asparagine) is linked at Asn-313. Residues Tyr-487 to Thr-507 form a helical membrane-spanning segment. Over Lys-508–Ile-523 the chain is Cytoplasmic.

Belongs to the UDP-glycosyltransferase family.

It localises to the membrane. It catalyses the reaction glucuronate acceptor + UDP-alpha-D-glucuronate = acceptor beta-D-glucuronoside + UDP + H(+). Its function is as follows. UDP-glucuronosyltransferases catalyze phase II biotransformation reactions in which lipophilic substrates are conjugated with glucuronic acid to increase water solubility and enhance excretion. They are of major importance in the conjugation and subsequent elimination of potentially toxic xenobiotics and endogenous compounds. This chain is UDP-glucuronosyltransferase 2A3 (UGT2A3), found in Pongo abelii (Sumatran orangutan).